We begin with the raw amino-acid sequence, 63 residues long: Large ribosomal subunit protein bL28 (63 aa).

Belongs to the bacterial ribosomal protein bL28 family.

This Thermomicrobium roseum (strain ATCC 27502 / DSM 5159 / P-2) protein is Large ribosomal subunit protein bL28.